Here is a 141-residue protein sequence, read N- to C-terminus: Large ribosomal subunit protein uL11B/uL11C (141 aa).

The protein belongs to the universal ribosomal protein uL11 family. In terms of assembly, part of the ribosomal stalk of the 50S ribosomal subunit. Interacts with L10 and the large rRNA to form the base of the stalk. L10 forms an elongated spine to which L12 dimers bind in a sequential fashion forming a multimeric L10(L12)X complex. One or more lysine residues are methylated.

Its function is as follows. Forms part of the ribosomal stalk which helps the ribosome interact with GTP-bound translation factors. The polypeptide is Large ribosomal subunit protein uL11B/uL11C (Bacillus cereus (strain ATCC 14579 / DSM 31 / CCUG 7414 / JCM 2152 / NBRC 15305 / NCIMB 9373 / NCTC 2599 / NRRL B-3711)).